The sequence spans 192 residues: Ribosomal RNA large subunit methyltransferase E (192 aa).

S-adenosyl-L-methionine is bound by residues Gly48, Phe50, Asp67, Asp85, and Asp107. The Proton acceptor role is filled by Lys147.

Belongs to the class I-like SAM-binding methyltransferase superfamily. RNA methyltransferase RlmE family.

Its subcellular location is the cytoplasm. The catalysed reaction is uridine(2552) in 23S rRNA + S-adenosyl-L-methionine = 2'-O-methyluridine(2552) in 23S rRNA + S-adenosyl-L-homocysteine + H(+). Its function is as follows. Specifically methylates the uridine in position 2552 of 23S rRNA at the 2'-O position of the ribose in the fully assembled 50S ribosomal subunit. This Borrelia garinii subsp. bavariensis (strain ATCC BAA-2496 / DSM 23469 / PBi) (Borreliella bavariensis) protein is Ribosomal RNA large subunit methyltransferase E.